The chain runs to 1365 residues: MEFSIKQSPLSVQSVVKCIKMKQAPEILGSANGKTPSCEVNRECSVFLSKAQLSSSLQEGVMQKFNGHDALPFIPADKLKDLTSRVFNGEPGAHDAKLRFESQEMKGIGTPPNTTPIKNGSPEIKLKITKTYMNGKPLFESSICGDSAADVSQSEENGQKPENKARRNRKRSIKYDSLLEQGLVEAALVSKISSPSDKKIPAKKESCPNTGRDKDHLLKYNVGDLVWSKVSGYPWWPCMVSADPLLHSYTKLKGQKKSARQYHVQFFGDAPERAWIFEKSLVAFEGEGQFEKLCQESAKQAPTKAEKIKLLKPISGKLRAQWEMGIVQAEEAASMSVEERKAKFTFLYVGDQLHLNPQVAKEAGIAAESLGEMAESSGVSEEAAENPKSVREECIPMKRRRRAKLCSSAETLESHPDIGKSTPQKTAEADPRRGVGSPPGRKKTTVSMPRSRKGDAASQFLVFCQKHRDEVVAEHPDASGEEIEELLRSQWSLLSEKQRARYNTKFALVAPVQAEEDSGNVNGKKRNHTKRIQDPTEDAEAEDTPRKRLRTDKHSLRKRDTITDKTARTSSYKAMEAASSLKSQAATKNLSDACKPLKKRNRASTAASSALGFSKSSSPSASLTENEVSDSPGDEPSESPYESADETQTEVSVSSKKSERGVTAKKEYVCQLCEKPGSLLLCEGPCCGAFHLACLGLSRRPEGRFTCSECASGIHSCFVCKESKTDVKRCVVTQCGKFYHEACVKKYPLTVFESRGFRCPLHSCVSCHASNPSNPRPSKGKMMRCVRCPVAYHSGDACLAAGCSVIASNSIICTAHFTARKGKRHHAHVNVSWCFVCSKGGSLLCCESCPAAFHPDCLNIEMPDGSWFCNDCRAGKKLHFQDIIWVKLGNYRWWPAEVCHPKNVPPNIQKMKHEIGEFPVFFFGSKDYYWTHQARVFPYMEGDRGSRYQGVRGIGRVFKNALQEAEARFREIKLQREARETQESERKPPPYKHIKVNKPYGKVQIYTADISEIPKCNCKPTDENPCGFDSECLNRMLMFECHPQVCPAGEFCQNQCFTKRQYPETKIIKTDGKGWGLVAKRDIRKGEFVNEYVGELIDEEECMARIKHAHENDITHFYMLTIDKDRIIDAGPKGNYSRFMNHSCQPNCETLKWTVNGDTRVGLFAVCDIPAGTELTFNYNLDCLGNEKTVCRCGASNCSGFLGDRPKTSTTLSSEEKGKKTKKKTRRRRAKGEGKRQSEDECFRCGDGGQLVLCDRKFCTKAYHLSCLGLGKRPFGKWECPWHHCDVCGKPSTSFCHLCPNSFCKEHQDGTAFSCTPDGRSYCCEHDLGAASVRSTKTEKPPPEPGKPKGKRRRRRGWRRVTEGK.

Residues threonine 110 and threonine 114 each carry the phosphothreonine modification. A Phosphoserine modification is found at serine 121. A disordered region spans residues 149-170 (ADVSQSEENGQKPENKARRNRK). Residue serine 172 is modified to Phosphoserine. A PWWP 1 domain is found at 222–286 (VGDLVWSKVS…FEKSLVAFEG (65 aa)). A Phosphoserine modification is found at serine 376. 2 disordered regions span residues 376–455 (SSGV…RKGD) and 516–658 (EDSG…SKKS). Threonine 422 bears the Phosphothreonine mark. The segment at residues 453–521 (KGDAASQFLV…VQAEEDSGNV (69 aa)) is a DNA-binding region (HMG box). Threonine 544 is modified (phosphothreonine). Residues 552–567 (DKHSLRKRDTITDKTA) show a composition bias toward basic and acidic residues. Over residues 580–590 (SLKSQAATKNL) the composition is skewed to polar residues. The segment covering 606–622 (AASSALGFSKSSSPSAS) has biased composition (low complexity). The residue at position 614 (serine 614) is a Phosphoserine. Over residues 632 to 648 (PGDEPSESPYESADETQ) the composition is skewed to acidic residues. PHD-type zinc fingers lie at residues 667-713 (EYVC…CASG), 714-770 (IHSC…CHAS), and 831-875 (VSWC…CRAG). The 63-residue stretch at 880-942 (FQDIIWVKLG…QARVFPYMEG (63 aa)) folds into the PWWP 2 domain. Residues 1011–1061 (SEIPKCNCKPTDENPCGFDSECLNRMLMFECHPQVCPAGEFCQNQCFTKRQ) form the AWS domain. Positions 1016, 1018, 1026, 1032, 1041, 1046, and 1052 each coordinate Zn(2+). The SET domain occupies 1063–1180 (PETKIIKTDG…AGTELTFNYN (118 aa)). Residues tryptophan 1075, 1115-1118 (THFY), and 1141-1142 (NH) contribute to the S-adenosyl-L-methionine site. Cysteine 1144 serves as a coordination point for Zn(2+). Asparagine 1186 is a binding site for S-adenosyl-L-methionine. A Post-SET domain is found at 1187–1203 (EKTVCRCGASNCSGFLG). Cysteine 1191 serves as a coordination point for Zn(2+). S-adenosyl-L-methionine is bound at residue arginine 1192. Zn(2+) contacts are provided by cysteine 1193 and cysteine 1198. A disordered region spans residues 1207 to 1232 (KTSTTLSSEEKGKKTKKKTRRRRAKG). Residues 1219–1230 (KKTKKKTRRRRA) are compositionally biased toward basic residues. Residues 1239 to 1286 (EDECFRCGDGGQLVLCDRKFCTKAYHLSCLGLGKRPFGKWECPWHHCD) form a PHD-type 4; atypical zinc finger. The tract at residues 1333–1365 (VRSTKTEKPPPEPGKPKGKRRRRRGWRRVTEGK) is disordered. The span at 1348-1359 (PKGKRRRRRGWR) shows a compositional bias: basic residues.

It belongs to the class V-like SAM-binding methyltransferase superfamily. Histone-lysine methyltransferase family. SET2 subfamily. In terms of assembly, interacts with HDAC1. Interacts (via PHD-type zinc fingers 1, 2 and 3) with SALL1. Interacts (via PHD-type 1, 2 and 3) with SALL4. Interacts with NANOG. Interacts with OGT. Interacts (via HMG box) with NKX2-5. Widely expressed. Predominantly expressed in thymus and testis.

The protein localises to the nucleus. It localises to the chromosome. Its subcellular location is the cytoplasm. It is found in the nucleolus. It catalyses the reaction L-lysyl(36)-[histone H3] + S-adenosyl-L-methionine = N(6)-methyl-L-lysyl(36)-[histone H3] + S-adenosyl-L-homocysteine + H(+). The catalysed reaction is L-lysyl(36)-[histone H3] + 2 S-adenosyl-L-methionine = N(6),N(6)-dimethyl-L-lysyl(36)-[histone H3] + 2 S-adenosyl-L-homocysteine + 2 H(+). Its function is as follows. Histone methyltransferase which specifically dimethylates nucleosomal histone H3 at 'Lys-36' (H3K36me2). Also monomethylates nucleosomal histone H3 at 'Lys-36' (H3K36me) in vitro. Does not trimethylate nucleosomal histone H3 at 'Lys-36' (H3K36me3). However, specifically trimethylates histone H3 at 'Lys-36' (H3K36me3) at euchromatic regions in embryonic stem (ES) cells. By methylating histone H3 at 'Lys-36', involved in the regulation of gene transcription during various biological processes. In ES cells, associates with developmental transcription factors such as SALL1 and represses inappropriate gene transcription mediated by histone deacetylation. During heart development, associates with transcription factor NKX2-5 to repress transcription of NKX2-5 target genes. Plays an essential role in adipogenesis, by regulating expression of genes involved in pre-adipocyte differentiation. During T-cell receptor (TCR) and CD28-mediated T-cell activation, promotes the transcription of transcription factor BCL6 which is required for follicular helper T (Tfh) cell differentiation. During B-cell development, required for the generation of the B1 lineage. During B2 cell activation, may contribute to the control of isotype class switch recombination (CRS), splenic germinal center formation, and the humoral immune response. Plays a role in class switch recombination of the immunoglobulin heavy chain (IgH) locus during B-cell activation. By regulating the methylation of histone H3 at 'Lys-36' and histone H4 at 'Lys-20' at the IgH locus, involved in TP53BP1 recruitment to the IgH switch region and promotes the transcription of IgA. Histone methyltransferase which specifically dimethylates nucleosomal histone H3 at 'Lys-36' (H3K36me2). Functionally, histone methyltransferase which specifically dimethylates nucleosomal histone H3 at 'Lys-36' (H3K36me2). Methylation of histone H3 at 'Lys-27' is controversial. Mono-, di- or tri-methylates histone H3 at 'Lys-27' (H3K27me, H3K27me2 and H3K27me3). Does not methylate histone H3 at 'Lys-27'. May act as a transcription regulator that binds DNA and suppresses IL5 transcription through HDAC recruitment. The protein is Histone-lysine N-methyltransferase NSD2 of Homo sapiens (Human).